A 390-amino-acid chain; its full sequence is Zinc transporter 7-B (390 aa).

At 1–37 (MLPLSIKDDEYKPPKFNLVRKVSGWIRSIFSDSTSRN) the chain is on the cytoplasmic side. Residues 38 to 58 (LFCFLCLNLSFAFVELFYGIW) traverse the membrane as a helical segment. Residues 59 to 67 (SNSLGLISD) lie on the Lumenal side of the membrane. The chain crosses the membrane as a helical span at residues 68–88 (SFHMFFDCTALLAGLAASVIS). Topologically, residues 89–102 (RWKTNETFSYGYVR) are cytoplasmic. Residues 103–123 (AEVLAGFVNGLFLIFTAFFIF) traverse the membrane as a helical segment. At 124-140 (SEGIERALDTPEVHHER) the chain is on the lumenal side. The chain crosses the membrane as a helical span at residues 141–161 (LLPVSIMGFLVNLIGIFVFQH). A his-rich loop region spans residues 161-226 (HGGGHGHSHE…GHDHSHKHGH (66 aa)). At 162–250 (GGGHGHSHES…KGSSKQILEG (89 aa)) the chain is on the cytoplasmic side. The segment at 166–243 (GHSHESGHGH…DEPPEENKGS (78 aa)) is disordered. Residues 187–201 (GHSHSHGGGHGHSHG) are compositionally biased toward basic residues. 2 stretches are compositionally biased toward basic and acidic residues: residues 202-218 (GGHE…EHGH) and 232-242 (CHDEPPEENKG). The chain crosses the membrane as a helical span at residues 251–271 (VFLHIVADALGSVGVIISTIL). Topologically, residues 272–276 (MQQYG) are lumenal. A helical membrane pass occupies residues 277–297 (LMIADPICSMLIALLIFVSVI). At 298–390 (PLLKQSIGIL…LYVQIDLAAM (93 aa)) the chain is on the cytoplasmic side.

This sequence belongs to the cation diffusion facilitator (CDF) transporter (TC 2.A.4) family. SLC30A subfamily. Homooligomer.

It localises to the golgi apparatus membrane. It is found in the cytoplasmic vesicle. The protein localises to the golgi apparatus. The protein resides in the trans-Golgi network. Its subcellular location is the sarcoplasmic reticulum. It localises to the mitochondrion. The enzyme catalyses Zn(2+)(in) = Zn(2+)(out). Functionally, zinc ion transporter mediating zinc entry from the cytosol into the lumen of organelles along the secretory pathway. By contributing to zinc ion homeostasis within the early secretory pathway, regulates the activation and folding of enzymes like alkaline phosphatases. The protein is Zinc transporter 7-B (slc30a7-b) of Xenopus laevis (African clawed frog).